The chain runs to 380 residues: tRNA-specific 2-thiouridylase MnmA (380 aa).

Residues 26–33 and Leu-52 contribute to the ATP site; that span reads AMSGGVDS. Cys-120 functions as the Nucleophile in the catalytic mechanism. Residues Cys-120 and Cys-217 are joined by a disulfide bond. Position 144 (Gly-144) interacts with ATP. Residues 166-168 form an interaction with tRNA region; sequence RDQ. Catalysis depends on Cys-217, which acts as the Cysteine persulfide intermediate.

Belongs to the MnmA/TRMU family.

The protein localises to the cytoplasm. The catalysed reaction is S-sulfanyl-L-cysteinyl-[protein] + uridine(34) in tRNA + AH2 + ATP = 2-thiouridine(34) in tRNA + L-cysteinyl-[protein] + A + AMP + diphosphate + H(+). Its function is as follows. Catalyzes the 2-thiolation of uridine at the wobble position (U34) of tRNA, leading to the formation of s(2)U34. The polypeptide is tRNA-specific 2-thiouridylase MnmA (Jannaschia sp. (strain CCS1)).